A 122-amino-acid polypeptide reads, in one-letter code: Small ribosomal subunit protein uS13 (122 aa).

The disordered stretch occupies residues 94–122 (RGLPVRGQRTKTNARQRKGPRPAIGGRKK).

The protein belongs to the universal ribosomal protein uS13 family. In terms of assembly, part of the 30S ribosomal subunit. Forms a loose heterodimer with protein S19. Forms two bridges to the 50S subunit in the 70S ribosome.

Located at the top of the head of the 30S subunit, it contacts several helices of the 16S rRNA. In the 70S ribosome it contacts the 23S rRNA (bridge B1a) and protein L5 of the 50S subunit (bridge B1b), connecting the 2 subunits; these bridges are implicated in subunit movement. Contacts the tRNAs in the A and P-sites. This is Small ribosomal subunit protein uS13 from Rubrobacter xylanophilus (strain DSM 9941 / JCM 11954 / NBRC 16129 / PRD-1).